Here is a 721-residue protein sequence, read N- to C-terminus: DNA ligase (721 aa).

NAD(+) contacts are provided by residues 39–43, 89–90, and Glu-123; these read DAEYD and SL. Lys-125 (N6-AMP-lysine intermediate) is an active-site residue. Residues Arg-146, Glu-186, Lys-302, and Lys-326 each contribute to the NAD(+) site. Positions 418, 421, 436, and 442 each coordinate Zn(2+). The interval 556–588 is disordered; that stretch reads QASSAAREGEPANADGAYDPATVTPDSDTAGAE. In terms of domain architecture, BRCT spans 641 to 721; that stretch reads TKDSAVAGKT…AWAEIVRQAG (81 aa).

Belongs to the NAD-dependent DNA ligase family. LigA subfamily. Mg(2+) serves as cofactor. The cofactor is Mn(2+).

The enzyme catalyses NAD(+) + (deoxyribonucleotide)n-3'-hydroxyl + 5'-phospho-(deoxyribonucleotide)m = (deoxyribonucleotide)n+m + AMP + beta-nicotinamide D-nucleotide.. In terms of biological role, DNA ligase that catalyzes the formation of phosphodiester linkages between 5'-phosphoryl and 3'-hydroxyl groups in double-stranded DNA using NAD as a coenzyme and as the energy source for the reaction. It is essential for DNA replication and repair of damaged DNA. The polypeptide is DNA ligase (Novosphingobium aromaticivorans (strain ATCC 700278 / DSM 12444 / CCUG 56034 / CIP 105152 / NBRC 16084 / F199)).